The following is an 804-amino-acid chain: E3 UFM1-protein ligase 1 homolog (804 aa).

M1 bears the N-acetylmethionine mark. A disordered region spans residues 397–483 (IHPSSKSSES…VKAQESNNII (87 aa)). Residues 400–409 (SSKSSESTES) show a composition bias toward low complexity. Residues 463–475 (LDSKAGGKKESVK) show a composition bias toward basic and acidic residues.

Belongs to the UFL1 family.

E3 UFM1-protein ligase that mediates ufmylation of target proteins. This Arabidopsis thaliana (Mouse-ear cress) protein is E3 UFM1-protein ligase 1 homolog.